The chain runs to 158 residues: Protein Smg homolog (158 aa).

Belongs to the Smg family.

The protein is Protein Smg homolog of Shewanella sp. (strain ANA-3).